The primary structure comprises 378 residues: Putative glutamate--cysteine ligase 2 (378 aa).

This sequence belongs to the glutamate--cysteine ligase type 2 family. YbdK subfamily.

It carries out the reaction L-cysteine + L-glutamate + ATP = gamma-L-glutamyl-L-cysteine + ADP + phosphate + H(+). In terms of biological role, ATP-dependent carboxylate-amine ligase which exhibits weak glutamate--cysteine ligase activity. In Leifsonia xyli subsp. xyli (strain CTCB07), this protein is Putative glutamate--cysteine ligase 2.